Reading from the N-terminus, the 332-residue chain is Biotin synthase (332 aa).

Positions 53 to 282 constitute a Radical SAM core domain; it reads HFGKKVKLNM…TKEIRISGGR (230 aa). [4Fe-4S] cluster is bound by residues Cys71, Cys75, and Cys78. [2Fe-2S] cluster is bound by residues Cys115, Cys147, Cys207, and Arg277.

The protein belongs to the radical SAM superfamily. Biotin synthase family. In terms of assembly, homodimer. It depends on [4Fe-4S] cluster as a cofactor. [2Fe-2S] cluster is required as a cofactor.

It carries out the reaction (4R,5S)-dethiobiotin + (sulfur carrier)-SH + 2 reduced [2Fe-2S]-[ferredoxin] + 2 S-adenosyl-L-methionine = (sulfur carrier)-H + biotin + 2 5'-deoxyadenosine + 2 L-methionine + 2 oxidized [2Fe-2S]-[ferredoxin]. It participates in cofactor biosynthesis; biotin biosynthesis; biotin from 7,8-diaminononanoate: step 2/2. Catalyzes the conversion of dethiobiotin (DTB) to biotin by the insertion of a sulfur atom into dethiobiotin via a radical-based mechanism. This is Biotin synthase from Bacillus cereus (strain AH187).